A 175-amino-acid chain; its full sequence is ATP synthase subunit delta (175 aa).

The protein belongs to the ATPase delta chain family. As to quaternary structure, F-type ATPases have 2 components, F(1) - the catalytic core - and F(0) - the membrane proton channel. F(1) has five subunits: alpha(3), beta(3), gamma(1), delta(1), epsilon(1). F(0) has three main subunits: a(1), b(2) and c(10-14). The alpha and beta chains form an alternating ring which encloses part of the gamma chain. F(1) is attached to F(0) by a central stalk formed by the gamma and epsilon chains, while a peripheral stalk is formed by the delta and b chains.

The protein resides in the cell inner membrane. In terms of biological role, f(1)F(0) ATP synthase produces ATP from ADP in the presence of a proton or sodium gradient. F-type ATPases consist of two structural domains, F(1) containing the extramembraneous catalytic core and F(0) containing the membrane proton channel, linked together by a central stalk and a peripheral stalk. During catalysis, ATP synthesis in the catalytic domain of F(1) is coupled via a rotary mechanism of the central stalk subunits to proton translocation. This protein is part of the stalk that links CF(0) to CF(1). It either transmits conformational changes from CF(0) to CF(1) or is implicated in proton conduction. The sequence is that of ATP synthase subunit delta from Xanthomonas campestris pv. campestris (strain 8004).